Consider the following 507-residue polypeptide: MNKDINIAAIIKNEIENFEGKIQNHDIGKVIIVGDGVALVSGIEKVKFGELVEFENNVLGIALNLEQDLIGVVIMASENSVFQGSIVRRTKSVISITVGDQLLGRVVNALGIPIDGKAELDNSLKSAIFTNAPSIMDRKSVDRGLKTGILAIDSLVPIGKGQRELIIGDRQTGKTTIAIDAILNQKGKNVYCVYVAIGQKNSSVAQIVSLLEKKGALEYTTVILAGASELSPLQYLAPYSGAAIAEYWMNKKKDVLIIYDDLSKHAIAYRTLSLLLRRPPGREAFPGDIFYQHSYLLERSAQLSNDKGGGSITALPIIETQAGDISAYIPTNVISITDGQIFLRDSLFNSGQKPAIDIGLSVSRVGSAAQTNLMKWASSSLKLNLAQYNELKAFAQFGSDLGPSSQLILDRGNKIYEILKQENQYPLTERQQIMLLILIRENLIDSLEQKSIPLFKSAFLKYCDSEPKFRDKIEKMDYNRVLEPNNLAGILKDITDFIEKFNLGNVF.

Position 168 to 175 (168 to 175 (GDRQTGKT)) interacts with ATP.

This sequence belongs to the ATPase alpha/beta chains family. As to quaternary structure, F-type ATPases have 2 components, CF(1) - the catalytic core - and CF(0) - the membrane proton channel. CF(1) has five subunits: alpha(3), beta(3), gamma(1), delta(1), epsilon(1). CF(0) has three main subunits: a(1), b(2) and c(9-12). The alpha and beta chains form an alternating ring which encloses part of the gamma chain. CF(1) is attached to CF(0) by a central stalk formed by the gamma and epsilon chains, while a peripheral stalk is formed by the delta and b chains.

It is found in the cell membrane. It carries out the reaction ATP + H2O + 4 H(+)(in) = ADP + phosphate + 5 H(+)(out). Produces ATP from ADP in the presence of a proton gradient across the membrane. The alpha chain is a regulatory subunit. The chain is ATP synthase subunit alpha from Mesomycoplasma hyopneumoniae (strain 7448) (Mycoplasma hyopneumoniae).